The sequence spans 473 residues: Cannabinoid receptor 1 (473 aa).

Over 1–117 (MKSILDGLAD…CFMILNPSQQ (117 aa)) the chain is Extracellular. Positions 2–23 (KSILDGLADTTFRTITTDLLYV) are required for mitochondrial localization. N78 and N84 each carry an N-linked (GlcNAc...) asparagine glycan. A helical membrane pass occupies residues 118 to 143 (LAIAVLSLTLGTFTVLENLLVLCVIL). Over 144-155 (HSRSLRCRPSYH) the chain is Cytoplasmic. A helical transmembrane segment spans residues 156–176 (FIGSLAVADLLGSVIFVYSFV). Topologically, residues 177–188 (DFHVFHRKDSPN) are extracellular. A helical membrane pass occupies residues 189 to 213 (VFLFKLGGVTASFTASVGSLFLTAI). At 214 to 233 (DRYISIHRPLAYKRIVTRPK) the chain is on the cytoplasmic side. The helical transmembrane segment at 234–256 (AVVAFCLMWTIAIVIAVLPLLGW) threads the bilayer. At 257-274 (NCKKLQSVCSDIFPLIDE) the chain is on the extracellular side. Residues 275–300 (TYLMFWIGVTSVLLLFIVYAYMYILW) traverse the membrane as a helical segment. At 301-345 (KAHSHAVRMIQRGTQKSIIIHTSEDGKVQVTRPDQARMDIRLAKT) the chain is on the cytoplasmic side. The chain crosses the membrane as a helical span at residues 346–366 (LVLILVVLIICWGPLLAIMVY). The Extracellular segment spans residues 367–378 (DVFGKMNKLIKT). The chain crosses the membrane as a helical span at residues 379-400 (VFAFCSMLCLLNSTVNPIIYAL). Residues 401 to 473 (RSKDLRHAFR…VSTDTSAEAL (73 aa)) lie on the Cytoplasmic side of the membrane. Residue C416 is the site of S-palmitoyl cysteine attachment. A phosphoserine mark is found at S426 and S430.

The protein belongs to the G-protein coupled receptor 1 family. Interacts (via C-terminus) with CNRIP1. Associates with G protein alpha subunits, including G(i) alpha-1/GNAI1, G(i) alpha-3/GNAI3 and G(o)-alpha/GNAO1; palmitoylation is important for interaction with GNAI3 and GNAO1. Palmitoylation at Cys-416 is important for recruitment at both plasma membrane and lipid rafts and association with G protein alpha subunits. Expressed in the brain, in the striatum, medial septum, descending arm of the band of Broca, the amygdaloid nucleus, the hippocampus and cortex (at protein level). High levels in the lateral striatum. In rostral brain regions, high expression levels in the dorsal lateral striatum, while in the caudal brain regions, high levels are observed in the ventral lateral striatum. Expressed in monocytes/macrophages (at protein level). Expressed in striated muscles and in vascular smooth muscles cells (at protein level).

The protein localises to the cell membrane. It is found in the mitochondrion outer membrane. The protein resides in the cell projection. Its subcellular location is the axon. It localises to the presynapse. Hemopressin, a peptide derived from hemoglobin subunit alpha (HBA1 and/or HBA2), acts as an antagonist peptide: hemopressin-binding efficiently blocks cannabinoid receptor CNR1 and subsequent signaling. Functionally, G-protein coupled receptor for cannabinoids, including endocannabinoids (eCBs), such as N-arachidonoylethanolamide (also called anandamide or AEA) and 2-arachidonoylglycerol (2-AG). Mediates many cannabinoid-induced effects, acting, among others, on food intake, memory loss, gastrointestinal motility, catalepsy, ambulatory activity, anxiety, chronic pain. Signaling typically involves reduction in cyclic AMP. In the hypothalamus, may have a dual effect on mitochondrial respiration depending upon the agonist dose and possibly upon the cell type. Increases respiration at low doses, while decreases respiration at high doses. At high doses, CNR1 signal transduction involves G-protein alpha-i protein activation and subsequent inhibition of mitochondrial soluble adenylate cyclase, decrease in cyclic AMP concentration, inhibition of protein kinase A (PKA)-dependent phosphorylation of specific subunits of the mitochondrial electron transport system, including NDUFS2. In the hypothalamus, inhibits leptin-induced reactive oxygen species (ROS) formation and mediates cannabinoid-induced increase in SREBF1 and FASN gene expression. In response to cannabinoids, drives the release of orexigenic beta-endorphin, but not that of melanocyte-stimulating hormone alpha/alpha-MSH, from hypothalamic POMC neurons, hence promoting food intake. In the hippocampus, regulates cellular respiration and energy production in response to cannabinoids. Involved in cannabinoid-dependent depolarization-induced suppression of inhibition (DSI), a process in which depolarization of CA1 postsynaptic pyramidal neurons mobilizes eCBs, which retrogradely activate presynaptic CB1 receptors, transiently decreasing GABAergic inhibitory neurotransmission. Also reduces excitatory synaptic transmission. In superior cervical ganglions and cerebral vascular smooth muscle cells, inhibits voltage-gated Ca(2+) channels in a constitutive, as well as agonist-dependent manner. Induces leptin production in adipocytes and reduces LRP2-mediated leptin clearance in the kidney, hence participating in hyperleptinemia. In adipose tissue, CNR1 signaling leads to increased expression of SREBF1, ACACA and FASN genes. In the liver, activation by endocannabinoids leads to increased de novo lipogenesis and reduced fatty acid catabolism, associated with increased expression of SREBF1/SREBP-1, GCK, ACACA, ACACB and FASN genes. May also affect de novo cholesterol synthesis and HDL-cholesteryl ether uptake. Peripherally modulates energy metabolism. In high carbohydrate diet-induced obesity, may decrease the expression of mitochondrial dihydrolipoyl dehydrogenase/DLD in striated muscles, as well as that of selected glucose/ pyruvate metabolic enzymes, hence affecting energy expenditure through mitochondrial metabolism. In response to cannabinoid anandamide, elicits a pro-inflammatory response in macrophages, which involves NLRP3 inflammasome activation and IL1B and IL18 secretion. In macrophages infiltrating pancreatic islets, this process may participate in the progression of type-2 diabetes and associated loss of pancreatic beta-cells. This chain is Cannabinoid receptor 1 (Cnr1), found in Rattus norvegicus (Rat).